A 320-amino-acid chain; its full sequence is uncharacterized protein (320 aa).

46–53 (DVPGVGKT) is an ATP binding site.

Belongs to the MoxR family.

This is an uncharacterized protein from Bacillus subtilis (strain 168).